Reading from the N-terminus, the 115-residue chain is Superoxide reductase (115 aa).

Glu14, His16, His41, His47, Cys102, and His105 together coordinate Fe cation.

Belongs to the desulfoferrodoxin family. As to quaternary structure, homotetramer. Fe cation is required as a cofactor.

It carries out the reaction reduced [rubredoxin] + superoxide + 2 H(+) = oxidized [rubredoxin] + H2O2. In terms of biological role, uses electrons from reduced NADP, by way of rubredoxin and an oxidoreductase, to catalyze the reduction of superoxide to hydrogen peroxide. In Pyrococcus horikoshii (strain ATCC 700860 / DSM 12428 / JCM 9974 / NBRC 100139 / OT-3), this protein is Superoxide reductase (sorA).